Here is a 545-residue protein sequence, read N- to C-terminus: Squalene monooxygenase SE2 (545 aa).

The helical transmembrane segment at 12-32 (EYFLMFAATLLFGFVLYLFTL) threads the bilayer. FAD-binding positions include 86–87 (VA), 106–107 (ER), arginine 114, arginine 185, valine 201, aspartate 364, and methionine 377. A run of 2 helical transmembrane segments spans residues 475 to 495 (LFFHFFAVAIYGVGRLLIPFP) and 500 to 520 (MWLGARLISGASGIIFPIIKS).

Belongs to the squalene monooxygenase family. FAD serves as cofactor. Weak expression in petioles and flower buds and barely detectable in roots and leaves. In petioles, preferentially observed in vascular bundle tissue (phloem cells and parenchymatous cells near xylem) and resin ducts.

The protein localises to the membrane. The catalysed reaction is squalene + reduced [NADPH--hemoprotein reductase] + O2 = (S)-2,3-epoxysqualene + oxidized [NADPH--hemoprotein reductase] + H2O + H(+). The protein operates within terpene metabolism; lanosterol biosynthesis; lanosterol from farnesyl diphosphate: step 2/3. In terms of biological role, component of the triterpene saponins (e.g. ginsenosides or panaxosides) and phytosterols biosynthetic pathways. Catalyzes the first oxygenation step in sterol biosynthesis and is suggested to be one of the rate-limiting enzymes in this pathway. The polypeptide is Squalene monooxygenase SE2 (Panax ginseng (Korean ginseng)).